We begin with the raw amino-acid sequence, 212 residues long: Ribonuclease HII (212 aa).

The RNase H type-2 domain occupies 7-212 (SQILGIDEAG…TIENITKSTE (206 aa)). Residues aspartate 13, glutamate 14, and aspartate 111 each coordinate a divalent metal cation.

Belongs to the RNase HII family. Mn(2+) is required as a cofactor. The cofactor is Mg(2+).

The protein localises to the cytoplasm. It carries out the reaction Endonucleolytic cleavage to 5'-phosphomonoester.. Functionally, endonuclease that specifically degrades the RNA of RNA-DNA hybrids. This chain is Ribonuclease HII, found in Methanosphaera stadtmanae (strain ATCC 43021 / DSM 3091 / JCM 11832 / MCB-3).